A 572-amino-acid polypeptide reads, in one-letter code: Putative inorganic phosphate transporter C8E4.01c (572 aa).

Residues methionine 1–leucine 47 are Cytoplasmic-facing. A phosphoserine mark is found at serine 12 and serine 14. The helical transmembrane segment at methionine 48–valine 68 threads the bilayer. The Extracellular segment spans residues threonine 69–asparagine 99. A helical transmembrane segment spans residues alanine 100–phenylalanine 120. The Cytoplasmic segment spans residues glycine 121 to lysine 123. Residues phenylalanine 124–proline 144 traverse the membrane as a helical segment. At lysine 145 to lysine 153 the chain is on the extracellular side. Residues methionine 154 to methionine 174 traverse the membrane as a helical segment. The Cytoplasmic portion of the chain corresponds to serine 175–serine 193. A helical transmembrane segment spans residues leucine 194–leucine 214. The Extracellular segment spans residues glycine 215–lysine 229. The helical transmembrane segment at leucine 230–isoleucine 250 threads the bilayer. Over proline 251–lysine 346 the chain is Cytoplasmic. Positions lysine 265–glutamate 297 are disordered. The segment covering asparagine 286–serine 296 has biased composition (basic and acidic residues). Serine 292 and serine 296 each carry phosphoserine. A helical transmembrane segment spans residues histidine 347 to leucine 367. At asparagine 368–asparagine 395 the chain is on the extracellular side. A helical transmembrane segment spans residues leucine 396–isoleucine 416. The Cytoplasmic portion of the chain corresponds to leucine 417–lysine 420. The helical transmembrane segment at tryptophan 421–tryptophan 441 threads the bilayer. The Extracellular portion of the chain corresponds to asparagine 442–arginine 449. Residues phenylalanine 450–isoleucine 470 form a helical membrane-spanning segment. Over tyrosine 471–histidine 485 the chain is Cytoplasmic. A helical membrane pass occupies residues glycine 486–leucine 506. Residues threonine 507–glycine 508 lie on the Extracellular side of the membrane. Residues valine 509–phenylalanine 529 traverse the membrane as a helical segment. The Cytoplasmic segment spans residues threonine 530 to phenylalanine 572.

Belongs to the major facilitator superfamily. Sugar transporter (TC 2.A.1.1) family.

It localises to the membrane. High-affinity transporter for external inorganic phosphate. The protein is Putative inorganic phosphate transporter C8E4.01c of Schizosaccharomyces pombe (strain 972 / ATCC 24843) (Fission yeast).